The following is a 207-amino-acid chain: Claudin-11 (207 aa).

Position 1 (methionine 1) is a topological domain, cytoplasmic. The helical transmembrane segment at 2–22 threads the bilayer; that stretch reads VATCLQVVGFVTSFVGWIGVI. The Extracellular segment spans residues 23–82; the sequence is VTTSTNDWVVTCGYTIPTCRKLDELGSKGLWADCVMATGLYHCKPLVDILILPGYVQACR. A helical transmembrane segment spans residues 83–103; it reads ALMIAASVLGLPAILLLLTVL. Topologically, residues 104–122 are cytoplasmic; that stretch reads PCIRMGHEPGVAKYRRAQL. The chain crosses the membrane as a helical span at residues 123–143; sequence AGVLLILLALCAIVATIWFPV. Residues 144-157 lie on the Extracellular side of the membrane; sequence CAHRETTIVSFGYS. The chain crosses the membrane as a helical span at residues 158-178; the sequence is LYAGWIGAVLCLVGGCVILCC. Residues 179–207 are Cytoplasmic-facing; sequence AGDAQAFGENRFYYSSGSSSPTHAKSAHV. A phosphoserine mark is found at serine 193, serine 194, serine 197, and serine 198.

Belongs to the claudin family. Interacts with tetraspanin-3/TSPAN3. Interacts with OCLN.

It is found in the cell junction. The protein localises to the tight junction. The protein resides in the cell membrane. Functionally, plays a major role in tight junction-specific obliteration of the intercellular space, through calcium-independent cell-adhesion activity. The protein is Claudin-11 (CLDN11) of Macaca fascicularis (Crab-eating macaque).